Here is a 585-residue protein sequence, read N- to C-terminus: MLTRMSQLFVRTLREDPADAEVPSHRWLVRAGYIRRVAPGVYSWLPLGLRVMRRIEAICREEMASIGAQEVSFPALLASDPYKETGRWVEYGDNLFRLKDRKGVDMLLGPTHEEMFTLMVKDLYSSYKDLPLCLYQIQNKYRDEARPRAGILRGREFVMMDAYSFDVAQEGLDEAYQAQRDAYIRIFNRLGFDYAIVKAMSGPMGGSRSEEFLAVAANGEDTFVRSSGGYAANVEAVRMAVPDPLPIDGLPEAEVVDTPDARTIESLVRIANEVRPRADRPWTGADTLKNVVFMVAHPDGTREPLAIGLPGDRDVDEKRLEAVLEPAVVEPFTEEDFAANPQLVKGYIGPGALGEDNSSKVRYLVDPRVVTGTSWITGADQKDRHVFNLVAGRDFTPDGVIDVAEIREGDPAPDGSGELHLARGIEIGHIFQLGKKYADALGLKVLDHNGKLVTVTMGSYGLGVSRAVAAIAEGTCDEKGLCWPREVAPYDVQVLATGKGTEILDEATRIASELAEAGLEVLLDDRKASPGVKFADSEILGMPTSVVVGRGLKDGLVEVRDRSTGENRQVSVAEAVCAVLKEVRG.

The protein belongs to the class-II aminoacyl-tRNA synthetase family. ProS type 1 subfamily. As to quaternary structure, homodimer.

The protein resides in the cytoplasm. The enzyme catalyses tRNA(Pro) + L-proline + ATP = L-prolyl-tRNA(Pro) + AMP + diphosphate. Catalyzes the attachment of proline to tRNA(Pro) in a two-step reaction: proline is first activated by ATP to form Pro-AMP and then transferred to the acceptor end of tRNA(Pro). As ProRS can inadvertently accommodate and process non-cognate amino acids such as alanine and cysteine, to avoid such errors it has two additional distinct editing activities against alanine. One activity is designated as 'pretransfer' editing and involves the tRNA(Pro)-independent hydrolysis of activated Ala-AMP. The other activity is designated 'posttransfer' editing and involves deacylation of mischarged Ala-tRNA(Pro). The misacylated Cys-tRNA(Pro) is not edited by ProRS. This chain is Proline--tRNA ligase, found in Cutibacterium acnes (strain DSM 16379 / KPA171202) (Propionibacterium acnes).